Consider the following 517-residue polypeptide: Ribonuclease Y (517 aa).

The helical transmembrane segment at 1–21 (MIEVLIGLGAGVVGVGAGYLY) threads the bilayer. The region spanning 207–273 (LINVVNIKND…TRVIELLVED (67 aa)) is the KH domain. Residues 333 to 426 (ALAHSLEVAH…VCAADALSAA (94 aa)) form the HD domain.

Belongs to the RNase Y family.

It localises to the cell membrane. Endoribonuclease that initiates mRNA decay. The protein is Ribonuclease Y of Campylobacter concisus (strain 13826).